The primary structure comprises 503 residues: Transmembrane prolyl 4-hydroxylase (503 aa).

The tract at residues 1 to 49 is disordered; sequence MAAAVATVQRPEAETVEEASNLQWPLPPEHRPSGAATRPGDSEDAPVRP. Topologically, residues 1 to 61 are cytoplasmic; that stretch reads MAAAVATVQR…KPRGICSRAY (61 aa). A helical; Signal-anchor for type II membrane protein transmembrane segment spans residues 62–82; that stretch reads FLVLMVFVHLYLGNVLALLLF. Topologically, residues 83-503 are lumenal; the sequence is VHYSNGDEST…RAYSDARVEL (421 aa). Residues 90 to 110 are disordered; it reads ESTDPGPQRREQSPQPVPTLG. EF-hand domains lie at 186-221 and 225-260; these read AMQV…GNGR and PENI…DFHK. Ca(2+) is bound by residues aspartate 199, asparagine 201, aspartate 203, arginine 205, glutamate 210, aspartate 238, aspartate 240, aspartate 242, and glutamate 249. Positions 310-461 constitute a Fe2OG dioxygenase domain; the sequence is EFSEPLQVVR…KWIANNWINV (152 aa). Fe cation contacts are provided by histidine 329 and aspartate 331. Residues asparagine 349 and asparagine 369 are each glycosylated (N-linked (GlcNAc...) asparagine). Glutamate 375 lines the Fe cation pocket. Asparagine 383 carries an N-linked (GlcNAc...) asparagine glycan. Lysine 452 serves as a coordination point for 2-oxoglutarate.

Homodimer. Fe(2+) serves as cofactor. L-ascorbate is required as a cofactor. Glycosylated. As to expression, highest expression levels are detected in the eye and brain, especially in the retinal epithelium cells and cortical neurons. Also expressed in skeletal muscle, lung, heart, adrenal gland, kidney, prostate, thyroid and testis.

Its subcellular location is the endoplasmic reticulum membrane. The enzyme catalyses L-prolyl-[hypoxia-inducible factor alpha subunit] + 2-oxoglutarate + O2 = trans-4-hydroxy-L-prolyl-[hypoxia-inducible factor alpha subunit] + succinate + CO2. Its function is as follows. Catalyzes the post-translational formation of 4-hydroxyproline in hypoxia-inducible factor (HIF) alpha proteins. Hydroxylates HIF1A at 'Pro-402' and 'Pro-564'. May function as a cellular oxygen sensor and, under normoxic conditions, may target HIF through the hydroxylation for proteasomal degradation via the von Hippel-Lindau ubiquitination complex. This Mus musculus (Mouse) protein is Transmembrane prolyl 4-hydroxylase (P4htm).